The primary structure comprises 412 residues: Dihydrolipoyllysine-residue acetyltransferase component of pyruvate dehydrogenase complex (412 aa).

The Lipoyl-binding domain occupies 2–78; it reads PIKILMPVLS…PVNSLIAVLS (77 aa). The residue at position 43 (lysine 43) is an N6-lipoyllysine. Residues 132 to 169 form the Peripheral subunit-binding (PSBD) domain; the sequence is FASPLAKRLAKMGNIRLESVKGSGPHGRIVKQDILSYT. Histidine 385 is a catalytic residue.

The protein belongs to the 2-oxoacid dehydrogenase family. As to quaternary structure, forms a 24-polypeptide structural core with octahedral symmetry. It depends on (R)-lipoate as a cofactor.

It carries out the reaction N(6)-[(R)-dihydrolipoyl]-L-lysyl-[protein] + acetyl-CoA = N(6)-[(R)-S(8)-acetyldihydrolipoyl]-L-lysyl-[protein] + CoA. The pyruvate dehydrogenase complex catalyzes the overall conversion of pyruvate to acetyl-CoA and CO(2). It contains multiple copies of three enzymatic components: pyruvate dehydrogenase (E1), dihydrolipoamide acetyltransferase (E2) and lipoamide dehydrogenase (E3). The chain is Dihydrolipoyllysine-residue acetyltransferase component of pyruvate dehydrogenase complex (pdhC) from Rickettsia felis (strain ATCC VR-1525 / URRWXCal2) (Rickettsia azadi).